An 807-amino-acid polypeptide reads, in one-letter code: Dual specificity protein phosphatase PPS1 (807 aa).

Positions 585-783 (LPSRILRHLY…LFKWWKKHYN (199 aa)) constitute a Tyrosine-protein phosphatase domain. The segment at 593–807 (LYLGSLDHAQ…GIAEVNMKYT (215 aa)) is catalytic. Cys-725 (phosphocysteine intermediate) is an active-site residue.

This sequence belongs to the protein-tyrosine phosphatase family. Non-receptor class dual specificity subfamily.

It carries out the reaction O-phospho-L-tyrosyl-[protein] + H2O = L-tyrosyl-[protein] + phosphate. The catalysed reaction is O-phospho-L-seryl-[protein] + H2O = L-seryl-[protein] + phosphate. The enzyme catalyses O-phospho-L-threonyl-[protein] + H2O = L-threonyl-[protein] + phosphate. In terms of biological role, protein phosphatase with specificity for serine, threonine, and tyrosine residues; has a role in the DNA synthesis phase of the cell cycle. The sequence is that of Dual specificity protein phosphatase PPS1 (PPS1) from Saccharomyces cerevisiae (strain ATCC 204508 / S288c) (Baker's yeast).